The primary structure comprises 456 residues: N(6)-adenosine-methyltransferase non-catalytic subunit METTL14 (456 aa).

Residues 50 to 75 (TCRASYDTSAPNAKRKYLDEGETDED) are disordered. 2 interaction with METTL3 regions span residues 135 to 136 (RD) and 237 to 238 (SG). The positively charged region required for RNA-binding stretch occupies residues 245-254 (RVCLRKWGYR). Interaction with METTL3 stretches follow at residues 255–258 (RCED) and 278–287 (KAVFQRTKEH). The tract at residues 297 to 298 (KR) is positively charged region required for RNA-binding. The segment at 308–312 (NVDID) is interaction with METTL3. Positions 393-456 (ERLRPKSPPP…GAHRGGFPPR (64 aa)) are disordered. Position 399 is a phosphoserine (S399). A compositionally biased stretch (gly residues) spans 409–423 (GGGAPRGGGRGGTSA). Residues 425–440 (RGRERNRSNFRGERGG) are compositionally biased toward basic and acidic residues. Gly residues predominate over residues 441 to 450 (FRGGRGGAHR).

This sequence belongs to the MT-A70-like family. Heterodimer; heterodimerizes with METTL3 to form an antiparallel heterodimer that constitutes an active methyltransferase. Component of the WMM complex, a N6-methyltransferase complex composed of a catalytic subcomplex, named MAC, and of an associated subcomplex, named MACOM. The MAC subcomplex is composed of METTL3 and METTL14. The MACOM subcomplex is composed of WTAP, ZC3H13, CBLL1/HAKAI, VIRMA, and, in some cases of RBM15 (RBM15 or RBM15B).

Its subcellular location is the nucleus. Functionally, the METTL3-METTL14 heterodimer forms a N6-methyltransferase complex that methylates adenosine residues at the N(6) position of some mRNAs and regulates the circadian clock, differentiation of embryonic stem cells and cortical neurogenesis. In the heterodimer formed with METTL3, METTL14 constitutes the RNA-binding scaffold that recognizes the substrate rather than the catalytic core. N6-methyladenosine (m6A), which takes place at the 5'-[AG]GAC-3' consensus sites of some mRNAs, plays a role in mRNA stability and processing. M6A acts as a key regulator of mRNA stability by promoting mRNA destabilization and degradation. In embryonic stem cells (ESCs), m6A methylation of mRNAs encoding key naive pluripotency-promoting transcripts results in transcript destabilization. M6A regulates spermatogonial differentiation and meiosis and is essential for male fertility and spermatogenesis. M6A also regulates cortical neurogenesis: m6A methylation of transcripts related to transcription factors, neural stem cells, the cell cycle and neuronal differentiation during brain development promotes their destabilization and decay, promoting differentiation of radial glial cells. In Homo sapiens (Human), this protein is N(6)-adenosine-methyltransferase non-catalytic subunit METTL14.